Consider the following 320-residue polypeptide: Cyclin-D6-1 (320 aa).

The disordered stretch occupies residues 279 to 320 (HHRSASSESERTTTVGSAANSADAKRRCMGPPRQWGVGGPDE).

Belongs to the cyclin family. Cyclin D subfamily.

In Oryza sativa subsp. japonica (Rice), this protein is Cyclin-D6-1 (CYCD6-1).